The primary structure comprises 208 residues: Small ribosomal subunit protein uS5 (208 aa).

Residues 1–21 (MSDREQRDGGRSAENNNDRKG) are compositionally biased toward basic and acidic residues. A disordered region spans residues 1 to 38 (MSDREQRDGGRSAENNNDRKGRNNGRRNDRRNHQDNER). The S5 DRBM domain maps to 41–104 (YIERVVTINR…EEARKNFFRV (64 aa)).

Belongs to the universal ribosomal protein uS5 family. In terms of assembly, part of the 30S ribosomal subunit. Contacts proteins S4 and S8.

Its function is as follows. With S4 and S12 plays an important role in translational accuracy. Functionally, located at the back of the 30S subunit body where it stabilizes the conformation of the head with respect to the body. This is Small ribosomal subunit protein uS5 from Corynebacterium aurimucosum (strain ATCC 700975 / DSM 44827 / CIP 107346 / CN-1) (Corynebacterium nigricans).